A 697-amino-acid chain; its full sequence is Protein arginine N-methyltransferase 7 (697 aa).

SAM-dependent MTase PRMT-type domains lie at 14–357 (QNTW…YSLW) and 366–697 (EQPA…EETK).

Belongs to the class I-like SAM-binding methyltransferase superfamily. Protein arginine N-methyltransferase family. PRMT7 subfamily.

Its function is as follows. Essential arginine methyltransferase that can both catalyze the formation of omega-N monomethylarginine (MMA) and symmetrical dimethylarginine (sDMA). Specifically mediates the symmetrical dimethylation of arginine residues in the small nuclear ribonucleoproteins SmD1 and SmD3. The protein is Protein arginine N-methyltransferase 7 (Art7) of Drosophila virilis (Fruit fly).